A 728-amino-acid polypeptide reads, in one-letter code: Lutropin-choriogonadotropic hormone receptor (728 aa).

A signal peptide spans 1–19; sequence MLPALLPLLLPALLPGAGG. At 20–389 the chain is on the extracellular side; that stretch reads GRCPQRCACT…DILGYSFLRV (370 aa). 6 LRR repeats span residues 92–116, 117–142, 144–166, 168–191, 193–215, and 216–239; these read LPALSEILILNTKNLLHIEDGAFRN, LPRLKYLSICNTGIIEFPDLTQIFSS, AHFILELCDNLRMTTIPQNAFQG, SNESLTLKLYKNGFEDIHSHAFNG, KLNQLILKDNKNLRRIHNDALRG, and ATGPDVLDISSTALESLPSYGLEA. The helical transmembrane segment at 390–410 threads the bilayer; the sequence is LIWFINILALAGNFIVLLVLI. The Cytoplasmic segment spans residues 411–420; it reads TSHYKLTVPR. The helical transmembrane segment at 421-441 threads the bilayer; sequence FLMCNLSFADFCMGLYLLLIA. The Extracellular segment spans residues 442 to 466; sequence SVDAQTSGQYYNHAIDWQTGSGCST. A disulfide bond links Cys-464 and Cys-539. The chain crosses the membrane as a helical span at residues 467-487; that stretch reads AGFFTVFASELSVYTLTVITI. Residues 488–507 are Cytoplasmic-facing; sequence ERWHTITYAMQLDRKLRLRH. The helical transmembrane segment at 508–528 threads the bilayer; that stretch reads AVPIMLGGWVFSILIAVLPLL. Topologically, residues 529–551 are extracellular; that stretch reads GVSSYMKVSICLPMDIETGLSQA. A helical membrane pass occupies residues 552-572; that stretch reads YILLILMLNVIAFLVICACYI. Residues 573-595 lie on the Cytoplasmic side of the membrane; it reads KIYVAVQNPELVAANKDTKIAKR. The helical transmembrane segment at 596–616 threads the bilayer; that stretch reads MAILIFTDFTCMAPISFFAIS. At 617–630 the chain is on the extracellular side; it reads AAIKVPLITVTNSK. The chain crosses the membrane as a helical span at residues 631 to 651; sequence ILLVLFYPVNSCANPFLYAIF. Topologically, residues 652–728 are cytoplasmic; it reads TKAFQRDFFL…STKKSQPECQ (77 aa).

Belongs to the G-protein coupled receptor 1 family. FSH/LSH/TSH subfamily. Expressed in ovarian follicle granulosa cells. Expressed in ovarian follicle theca cells.

Its subcellular location is the cell membrane. Functionally, receptor for lutropin-choriogonadotropic hormone. The activity of this receptor is mediated by G proteins which activate adenylate cyclase. This Gallus gallus (Chicken) protein is Lutropin-choriogonadotropic hormone receptor.